We begin with the raw amino-acid sequence, 255 residues long: Triosephosphate isomerase (255 aa).

Substrate is bound at residue 15-17 (NWK). The active-site Electrophile is His-100. Residue Glu-172 is the Proton acceptor of the active site. Substrate is bound by residues Gly-178, Ser-218, and 239–240 (GG).

This sequence belongs to the triosephosphate isomerase family. As to quaternary structure, homodimer.

It localises to the cytoplasm. The catalysed reaction is D-glyceraldehyde 3-phosphate = dihydroxyacetone phosphate. Its pathway is carbohydrate biosynthesis; gluconeogenesis. The protein operates within carbohydrate degradation; glycolysis; D-glyceraldehyde 3-phosphate from glycerone phosphate: step 1/1. Involved in the gluconeogenesis. Catalyzes stereospecifically the conversion of dihydroxyacetone phosphate (DHAP) to D-glyceraldehyde-3-phosphate (G3P). The chain is Triosephosphate isomerase from Clostridium tetani (strain Massachusetts / E88).